A 111-amino-acid chain; its full sequence is uncharacterized protein (111 aa).

This is an uncharacterized protein from Acanthamoeba polyphaga mimivirus (APMV).